Consider the following 638-residue polypeptide: Probable inactive receptor kinase At4g23740 (638 aa).

An N-terminal signal peptide occupies residues 1 to 24; that stretch reads MEALRIYLWSLCLSLCLIIYGANS. LRR repeat units follow at residues 94–117, 118–139, 142–165, 166–188, and 189–198; these read ALRV…VELK, DLAF…DFSV, NLTS…SRLK, RIQS…SVLS, and SLQHIDLSNN. Residues 257–277 traverse the membrane as a helical segment; sequence VFLLIVIAVSIVVITALAFVL. One can recognise a Protein kinase domain in the interval 337-608; the sequence is RASAEVLGKG…SDLVRLIENV (272 aa). Ser-339 is subject to Phosphoserine. ATP is bound at residue 343–351; that stretch reads LGKGTFGTT. Phosphothreonine is present on Thr-360. Residue Lys-365 coordinates ATP. Phosphoserine occurs at positions 416 and 419. A phosphothreonine mark is found at Thr-436 and Thr-509. The residue at position 513 (Ser-513) is a Phosphoserine. Positions 612 to 638 are disordered; that stretch reads RTSIEPEPELKPKSENGASETSTPSEI. The segment covering 613-625 has biased composition (basic and acidic residues); that stretch reads TSIEPEPELKPKS. Residues 627 to 638 are compositionally biased toward polar residues; sequence NGASETSTPSEI.

The protein belongs to the protein kinase superfamily.

The protein localises to the membrane. The polypeptide is Probable inactive receptor kinase At4g23740 (Arabidopsis thaliana (Mouse-ear cress)).